Here is a 581-residue protein sequence, read N- to C-terminus: Activating signal cointegrator 1 (581 aa).

Position 2 is an N-acetylalanine (A2). The tract at residues 100–121 (DQLKRSRRKGRNKQEVPAFPEP) is disordered. The C4-type zinc-finger motif lies at 167-219 (GRHPCDCLGQKHKLINNCLVCGRIVCEQEGSGPCLFCGSLVCTNEEQDILQRD). The mediates interaction with DDRGK1 stretch occupies residues 200–300 (CLFCGSLVCT…ASDSNQWLSK (101 aa)). S276 carries the phosphoserine modification. Residue Y289 is modified to Phosphotyrosine. Positions 300-400 (KVEREMLQKR…WVDNTGSTPQ (101 aa)) are mediates interaction with UFL1. Glycyl lysine isopeptide (Lys-Gly) (interchain with G-Cter in UFM1) cross-links involve residues K324 and K334. Polar residues predominate over residues 390 to 406 (QWVDNTGSTPQKKTSLS). Positions 390–410 (QWVDNTGSTPQKKTSLSAGPR) are disordered. Residues 437–531 (LSMHQPWASL…FQEQFPDISQ (95 aa)) form the ASCH domain.

As to quaternary structure, interacts with the thyroid hormone receptor/TR (via the ligand-binding domain); this interaction requires the presence of thyroid hormone. Interacts with the androgen receptor/AR; in an androgen, testosterone and dihydrotestosterone-dependent manner. Interacts with ESR1 (estrogen ligand-bound); competes with UFSP2. Interacts with UFSP2; competes with ligand-bound ESR1. Interacts with DDRGK1 and UFL1; the interaction with DDRGK1 is direct. Interacts with NCOA1. Interacts with EP300. Part of the ASC-1 complex, that contains TRIP4, ASCC1, ASCC2 and ASCC3. Identified in the RQT (ribosome quality control trigger) complex, that contains ASCC2, ASCC3 and TRIP4. Interacts with NEK6. Interacts with CSRP1. Interacts with ZCCHC4. Phosphorylated by NEK6. Post-translationally, polyufmylated by the UFM1-conjugating system composed of the enzymes UBA5, UFC1 and UFL1. Deufmylated by the protease UFSP2. Ufmylation of TRIP4 is promoted by ligand-bound nuclear receptors that compete with UFSP2 for interaction with TRIP4. Nuclear receptors-induced ufmylation promotes the recruitment of additional transcriptional coactivators like EP300 and NCOA1 and therefore the assembly of a coactivator complex facilitating nuclear receptor-mediated transcription. In terms of tissue distribution, ubiquitously expressed. Expressed in the spinal cord, brain, paraspinal ganglia, thyroid, and submandibular glands. Expressed at low level in all the muscles (at protein level) but with higher expression in axial than in limb muscles.

It is found in the nucleus. The protein resides in the cytoplasm. It localises to the cytosol. Its subcellular location is the cytoskeleton. The protein localises to the microtubule organizing center. It is found in the centrosome. Transcription coactivator which associates with nuclear receptors, transcriptional coactivators including EP300, CREBBP and NCOA1, and basal transcription factors like TBP and TFIIA to facilitate nuclear receptors-mediated transcription. May thereby play an important role in establishing distinct coactivator complexes under different cellular conditions. Plays a role in thyroid hormone receptor and estrogen receptor transactivation. Also involved in androgen receptor transactivation. Plays a pivotal role in the transactivation of NF-kappa-B, SRF and AP1. Acts as a mediator of transrepression between nuclear receptor and either AP1 or NF-kappa-B. May play a role in the development of neuromuscular junction. May play a role in late myogenic differentiation. Also functions as part of the RQC trigger (RQT) complex that activates the ribosome quality control (RQC) pathway, a pathway that degrades nascent peptide chains during problematic translation. The sequence is that of Activating signal cointegrator 1 from Mus musculus (Mouse).